Consider the following 401-residue polypeptide: S-adenosylmethionine synthase (401 aa).

H15 is a binding site for ATP. Residue D17 coordinates Mg(2+). Position 43 (E43) interacts with K(+). Residues E56 and Q99 each coordinate L-methionine. The flexible loop stretch occupies residues Q99–T109. The segment at P101–L132 is disordered. ATP is bound by residues D174 to K176, D254, R260 to K261, A277, and K281. D254 serves as a coordination point for L-methionine. K285 is an L-methionine binding site.

It belongs to the AdoMet synthase family. As to quaternary structure, homotetramer; dimer of dimers. Requires Mg(2+) as cofactor. K(+) is required as a cofactor.

The protein resides in the cytoplasm. The enzyme catalyses L-methionine + ATP + H2O = S-adenosyl-L-methionine + phosphate + diphosphate. The protein operates within amino-acid biosynthesis; S-adenosyl-L-methionine biosynthesis; S-adenosyl-L-methionine from L-methionine: step 1/1. In terms of biological role, catalyzes the formation of S-adenosylmethionine (AdoMet) from methionine and ATP. The overall synthetic reaction is composed of two sequential steps, AdoMet formation and the subsequent tripolyphosphate hydrolysis which occurs prior to release of AdoMet from the enzyme. The protein is S-adenosylmethionine synthase of Corynebacterium urealyticum (strain ATCC 43042 / DSM 7109).